Here is a 364-residue protein sequence, read N- to C-terminus: tRNA(Met) cytidine acetate ligase (364 aa).

ATP is bound by residues 7 to 20, glycine 96, asparagine 152, and arginine 175; that span reads IAEF…HKYL.

The protein belongs to the TmcAL family.

Its subcellular location is the cytoplasm. The catalysed reaction is cytidine(34) in elongator tRNA(Met) + acetate + ATP = N(4)-acetylcytidine(34) in elongator tRNA(Met) + AMP + diphosphate. Its function is as follows. Catalyzes the formation of N(4)-acetylcytidine (ac(4)C) at the wobble position of elongator tRNA(Met), using acetate and ATP as substrates. First activates an acetate ion to form acetyladenylate (Ac-AMP) and then transfers the acetyl group to tRNA to form ac(4)C34. The protein is tRNA(Met) cytidine acetate ligase of Streptococcus sanguinis (strain SK36).